A 236-amino-acid polypeptide reads, in one-letter code: RNA-binding protein 24 (236 aa).

Residues 11–88 (TKIFVGGLPY…RKANVNLAYL (78 aa)) enclose the RRM domain. The segment at 175-199 (QYPYAASPAAAGYVTTGGYSYAVQQ) is necessary for interaction with EIF4E.

In terms of assembly, interacts with EIF4E; this interaction prevents EIF4E from binding to p53/TP53 mRNA and inhibits the assembly of translation initiation complex. In terms of tissue distribution, expressed strongly in heart and skeletal muscles. Weakly expressed in intestine, aorta, liver, lung, kidney, uterus and bladder.

Its subcellular location is the nucleus. The protein resides in the cytoplasm. Its function is as follows. Multifunctional RNA-binding protein involved in the regulation of pre-mRNA splicing, mRNA stability and mRNA translation important for cell fate decision and differentiation. Plays a major role in pre-mRNA alternative splicing regulation. Mediates preferentially muscle-specific exon inclusion in numerous mRNAs important for striated cardiac and skeletal muscle cell differentiation. Binds to intronic splicing enhancer (ISE) composed of stretches of GU-rich motifs localized in flanking intron of exon that will be included by alternative splicing. Involved in embryonic stem cell (ESC) transition to cardiac cell differentiation by promoting pre-mRNA alternative splicing events of several pluripotency and/or differentiation genes. Plays a role in the regulation of mRNA stability. Binds to 3'-untranslated region (UTR) AU-rich elements in target transcripts, such as CDKN1A and MYOG, leading to maintain their stabilities. Involved in myogenic differentiation by regulating MYOG levels. Binds to multiple regions in the mRNA 3'-UTR of TP63, hence inducing its destabilization. Also promotes the destabilization of the CHRM2 mRNA via its binding to a region in the coding sequence. Plays a role in the regulation of mRNA translation. Mediates repression of p53/TP53 mRNA translation through its binding to U-rich element in the 3'-UTR, hence preventing EIF4E from binding to p53/TP53 mRNA and translation initiation. Binds to a huge amount of mRNAs. Required for embryonic heart development, sarcomer and M-band formation in striated muscles. Together with RBM20, promotes the expression of short isoforms of PDLIM5/ENH in cardiomyocytes. The polypeptide is RNA-binding protein 24 (Mus musculus (Mouse)).